We begin with the raw amino-acid sequence, 204 residues long: Serotonin N-acetyltransferase (204 aa).

A Phosphothreonine; by PKA modification is found at Thr-28. Residues 32–193 enclose the N-acetyltransferase domain; the sequence is SEFRCLTPED…SFTELHCSLQ (162 aa). Leu-121 contributes to the substrate binding site. Residues 121 to 123 and 129 to 134 contribute to the acetyl-CoA site; these read LAV and QQGRGP. Residue Met-156 participates in substrate binding. Residue 165-167 participates in acetyl-CoA binding; it reads YER. Ser-202 bears the Phosphoserine mark.

Belongs to the acetyltransferase family. AANAT subfamily. As to quaternary structure, monomer. Interacts with several 14-3-3 proteins, including YWHAB, YWHAE, YWHAG and YWHAZ, preferentially when phosphorylated at Thr-28. Phosphorylation on Ser-202 also allows binding to YWHAZ, but with lower affinity. The interaction with YWHAZ considerably increases affinity for arylalkylamines and acetyl-CoA and protects the enzyme from dephosphorylation and proteasomal degradation. It may also prevent thiol-dependent inactivation. Post-translationally, cAMP-dependent phosphorylation regulates AANAT activity by promoting interaction with 14-3-3 proteins. Phosphorylation levels exhibit night/day variations, with an increase during nighttime. Highly expressed in pineal gland and in the photoreceptor outer segments in the retina. Expressed at about 100-fold lower levels in the pituitary gland and testis. Not detected in other tissues.

The protein localises to the cytoplasm. It carries out the reaction a 2-arylethylamine + acetyl-CoA = an N-acetyl-2-arylethylamine + CoA + H(+). It functions in the pathway aromatic compound metabolism; melatonin biosynthesis; melatonin from serotonin: step 1/2. Its function is as follows. Controls the night/day rhythm of melatonin production in the pineal gland. Catalyzes the N-acetylation of serotonin into N-acetylserotonin, the penultimate step in the synthesis of melatonin. In Macaca mulatta (Rhesus macaque), this protein is Serotonin N-acetyltransferase (AANAT).